We begin with the raw amino-acid sequence, 287 residues long: MRIVIITGLSGSGKSTAVRALEDEGFFCLDNLPVSLVTTFIELVEHSREDIKDVALVMDIRSRDFIKGYDQVFQAIASAGHSVKIFYFDATDEVLIRRFSETRRRHPALEGATVPEGIRFERDQLAGLRRIATAIIDTSEMNVHRLKELVIGLVKGGEGVLEMQVNLQSFGFRYGLPLESDLVMDVRFLPNPYFVATLRPFSGLDQGVREYVMGHKETVVFLEHFRDMLELLLPSYRREGKSYLSVSIGCTGGRHRSVAIAEELYNYFRQRNVNIKITHRDIDKGLG.

Residue 8 to 15 (GLSGSGKS) coordinates ATP. 59 to 62 (DIRS) is a GTP binding site.

Belongs to the RapZ-like family.

Its function is as follows. Displays ATPase and GTPase activities. The sequence is that of Nucleotide-binding protein Gbem_0872 from Citrifermentans bemidjiense (strain ATCC BAA-1014 / DSM 16622 / JCM 12645 / Bem) (Geobacter bemidjiensis).